We begin with the raw amino-acid sequence, 159 residues long: Phosphopantetheine adenylyltransferase (159 aa).

Ser-8 serves as a coordination point for substrate. ATP-binding positions include 8–9 (SF) and His-16. Substrate contacts are provided by Lys-40, Thr-72, and Arg-86. ATP-binding positions include 87–89 (GLR), Glu-97, and 122–128 (HSFVSSS).

It belongs to the bacterial CoaD family. Homohexamer. Mg(2+) serves as cofactor.

It is found in the cytoplasm. The catalysed reaction is (R)-4'-phosphopantetheine + ATP + H(+) = 3'-dephospho-CoA + diphosphate. It participates in cofactor biosynthesis; coenzyme A biosynthesis; CoA from (R)-pantothenate: step 4/5. Functionally, reversibly transfers an adenylyl group from ATP to 4'-phosphopantetheine, yielding dephospho-CoA (dPCoA) and pyrophosphate. The protein is Phosphopantetheine adenylyltransferase of Synechococcus sp. (strain JA-2-3B'a(2-13)) (Cyanobacteria bacterium Yellowstone B-Prime).